The following is an 89-amino-acid chain: UPF0298 protein GTNG_0961 (89 aa).

Belongs to the UPF0298 family.

It is found in the cytoplasm. This Geobacillus thermodenitrificans (strain NG80-2) protein is UPF0298 protein GTNG_0961.